The primary structure comprises 594 residues: Class I diterpene synthase TPS6, chloroplastic (594 aa).

Mg(2+) is bound by residues Asp-330, Asp-334, Asn-474, Gln-477, and Glu-482. The DDXXD motif motif lies at 330 to 334; sequence DDFFD.

Belongs to the terpene synthase family. Requires Mg(2+) as cofactor. As to expression, mostly expressed in trichomes of leaves and fruits.

The protein resides in the plastid. The protein localises to the chloroplast. It catalyses the reaction peregrinol diphosphate = labd-13(16),14-diene-9-ol + diphosphate. The catalysed reaction is 9alpha-copalyl diphosphate = syn-isopimara-7,15-diene + diphosphate. The protein operates within secondary metabolite biosynthesis; terpenoid biosynthesis. Its function is as follows. Involved in the biosynthesis of labdane-type diterpenoid including cleroda-dienols, and peregrinol lactones and furan derivatives, dopaminergic diterpenoids that can bind to dopamine receptors in the human pituitary gland, have probably ability to lower prolactin levels, and are used to treat menstrual cycle disorders (e.g. premenstrual syndrome and mastodynia). Terpene synthase the catalyzes the conversion of peregrinol diphosphate to labda-13(16),14-dien-9-ol, and of syn-copalyl diphosophate to dehydroabietadiene and syn-isopimara-7,15-diene. This chain is Class I diterpene synthase TPS6, chloroplastic, found in Vitex agnus-castus (Chaste tree).